The primary structure comprises 526 residues: MFS-type transporter clz19 (526 aa).

Positions 1–49 (MNVDTTSPQAPLAGVESKQDGASNEATAKAESTTHDQNESSSFDERPVH) are disordered. Basic and acidic residues predominate over residues 32–49 (STTHDQNESSSFDERPVH). A glycan (N-linked (GlcNAc...) asparagine) is linked at Asn38. Residues 59 to 79 (ALLAVASFAAAISPASTTTYY) form a helical membrane-spanning segment. N-linked (GlcNAc...) asparagine glycosylation occurs at Asn97. The next 3 membrane-spanning stretches (helical) occupy residues 126–143 (VYLV…GLAL), 186–206 (AYLT…GGLL), and 214–234 (AIFW…LTFF). 2 N-linked (GlcNAc...) asparagine glycosylation sites follow: Asn238 and Asn253. Helical transmembrane passes span 294–314 (FIVC…ISIF), 322–342 (YGYS…GSIL), 384–404 (LTVS…YGWL), 411–431 (VASV…VLIA), 446–466 (ALGA…VAAV), and 473–493 (IGIG…LPAL).

Belongs to the major facilitator superfamily.

The protein localises to the membrane. Its function is as follows. MFS-type transporter; part of the gene cluster that mediates the biosynthesis of squalestatin S1 (SQS1, also known as zaragozic acid A), a heavily oxidized fungal polyketide that offers potent cholesterol lowering activity by targeting squalene synthase (SS). In Cochliobolus lunatus (Filamentous fungus), this protein is MFS-type transporter clz19.